A 292-amino-acid polypeptide reads, in one-letter code: Probable septum site-determining protein MinC (292 aa).

A disordered region spans residues 112 to 188 (DTAPPNDVAT…PQSSSALVIT (77 aa)). A compositionally biased stretch (low complexity) spans 128-137 (EATAEAAAKA). Acidic residues predominate over residues 140–150 (QDDEAYGEQAD). The segment covering 171-185 (ANRPTATPPQSSSAL) has biased composition (polar residues).

This sequence belongs to the MinC family. Interacts with MinD and FtsZ.

Functionally, cell division inhibitor that blocks the formation of polar Z ring septums. Rapidly oscillates between the poles of the cell to destabilize FtsZ filaments that have formed before they mature into polar Z rings. Prevents FtsZ polymerization. The chain is Probable septum site-determining protein MinC from Bordetella bronchiseptica (strain ATCC BAA-588 / NCTC 13252 / RB50) (Alcaligenes bronchisepticus).